Reading from the N-terminus, the 444-residue chain is MEVKAKQLDSVNATASVKIPSGMIKSEVENLAKKASKSVKMDGFRPGKVPVSAVLKRYERELTQDAEQNLFKSAVNSALQELKKESKELVGEPYFEKFDRKDGEIIAELILSFKPEIKLDGYEKLIPEYQTPKVNKKEIDEKKDELLKRFSTPEAIKTKRALKEGDFAKFDFEGFVDDKAFEGGKAENYVLEIGSKQFIPGFEDGMVGMKIGEEKDIKVTFPKEYGAAHLADKDAVFKVKLHEIQELKIPELDDEMLKKLLPGEEKASVEVLDEKLKEQIKNEKLFKLVNDELKGKFADALIEKYNFDLPKGIVEQETDMQMRAAFNTFSEKEIEELKASKEKYQEKRDSFKEEAQKSVKLTFIIDELAKLRKIEVNDQELIQAIYFEAYRYGMNPKEHLENYKKQGALPAVKMALIEEKLFNDIFMPKTEKSEKASKKEKEDK.

The region spanning 165–250 (GDFAKFDFEG…LHEIQELKIP (86 aa)) is the PPIase FKBP-type domain.

Belongs to the FKBP-type PPIase family. Tig subfamily.

It localises to the cytoplasm. It catalyses the reaction [protein]-peptidylproline (omega=180) = [protein]-peptidylproline (omega=0). Involved in protein export. Acts as a chaperone by maintaining the newly synthesized protein in an open conformation. Functions as a peptidyl-prolyl cis-trans isomerase. The chain is Trigger factor from Campylobacter jejuni subsp. jejuni serotype O:23/36 (strain 81-176).